A 233-amino-acid chain; its full sequence is Large ribosomal subunit protein uL1 (233 aa).

Belongs to the universal ribosomal protein uL1 family. As to quaternary structure, part of the 50S ribosomal subunit.

In terms of biological role, binds directly to 23S rRNA. The L1 stalk is quite mobile in the ribosome, and is involved in E site tRNA release. Protein L1 is also a translational repressor protein, it controls the translation of the L11 operon by binding to its mRNA. The polypeptide is Large ribosomal subunit protein uL1 (Psychrobacter arcticus (strain DSM 17307 / VKM B-2377 / 273-4)).